A 324-amino-acid polypeptide reads, in one-letter code: Coproporphyrin III ferrochelatase (324 aa).

Fe(2+) contacts are provided by His184 and Glu266.

The protein belongs to the ferrochelatase family.

Its subcellular location is the cytoplasm. The catalysed reaction is Fe-coproporphyrin III + 2 H(+) = coproporphyrin III + Fe(2+). It participates in porphyrin-containing compound metabolism; protoheme biosynthesis. Its function is as follows. Involved in coproporphyrin-dependent heme b biosynthesis. Catalyzes the insertion of ferrous iron into coproporphyrin III to form Fe-coproporphyrin III. This Lactiplantibacillus plantarum (strain ATCC BAA-793 / NCIMB 8826 / WCFS1) (Lactobacillus plantarum) protein is Coproporphyrin III ferrochelatase.